The primary structure comprises 34 residues: Crassicorin-II (34 aa).

The cysteines at positions 6 and 30 are disulfide-linked.

In terms of tissue distribution, highly expressed by the mesenteries. Moderately expressed by the pharynx. Weakly expressed by the gonad and pedal disk. No expression in tentacle.

It localises to the secreted. It is found in the nematocyst. Peptide with both antimicrobial and neurotoxin activities. Cationic AMP with antimicrobial activity against both Gram-positive bacteria (B.subtilis) and Gram-negative bacteria (E.coli and S.enterica). Shows no significant antimicrobial activity against bacteria S.aureus and P.aeruginosa, as well as the fungus C.albicans. In vivo, induces reversible paralytic activity towards the shrimp P.paucidens. May act by impairing sodium or potassium channels in the prey. The protein is Crassicorin-II of Urticina crassicornis (Mottled anemone).